Here is an 8525-residue protein sequence, read N- to C-terminus: Nebulin (8525 aa).

Positions 34-70 are disordered; sequence TTTTRTSDYEQSETSKPALAQPALAQPASAKPVERRK. Residues 48–64 show a composition bias toward low complexity; that stretch reads SKPALAQPALAQPASAK. Nebulin repeat units follow at residues 83 to 110, 112 to 146, 156 to 181, 182 to 216, 217 to 251, 252 to 286, 296 to 321, 323 to 357, 362 to 396, 403 to 431, 433 to 467, 501 to 535, 536 to 570, 572 to 606, 610 to 644, 680 to 714, 748 to 782, 783 to 817, 819 to 853, 857 to 891, 892 to 918, 923 to 957, 968 to 986, 992 to 1026, 1027 to 1061, 1063 to 1097, 1101 to 1135, 1136 to 1166, 1167 to 1201, 1212 to 1230, 1236 to 1270, 1271 to 1305, 1307 to 1341, 1345 to 1379, 1380 to 1407, 1411 to 1445, 1456 to 1474, 1480 to 1514, 1515 to 1549, 1551 to 1585, 1589 to 1623, 1624 to 1654, 1655 to 1689, 1697 to 1725, 1730 to 1758, 1759 to 1793, 1795 to 1829, 1833 to 1867, 1868 to 1894, 1899 to 1933, 1949 to 1962, 1968 to 2002, 2003 to 2037, 2039 to 2073, 2077 to 2111, 2112 to 2138, 2143 to 2177, 2188 to 2206, 2212 to 2246, 2247 to 2281, 2283 to 2317, 2321 to 2355, 2356 to 2382, 2387 to 2421, 2436 to 2449, 2455 to 2489, 2490 to 2524, 2526 to 2560, 2564 to 2598, 2599 to 2625, 2630 to 2664, 2679 to 2692, 2698 to 2732, 2733 to 2767, 2769 to 2803, 2807 to 2841, 2842 to 2868, 2873 to 2907, 2917 to 2935, 2941 to 2975, 2976 to 3010, 3012 to 3046, 3050 to 3084, 3085 to 3111, 3116 to 3150, 3158 to 3178, 3184 to 3218, 3219 to 3253, 3255 to 3289, 3293 to 3327, 3328 to 3354, 3359 to 3393, 3401 to 3421, 3427 to 3461, 3462 to 3496, 3498 to 3532, 3536 to 3570, 3571 to 3597, 3602 to 3636, 3643 to 3664, 3670 to 3704, 3705 to 3739, 3741 to 3775, 3779 to 3813, 3814 to 3840, 3845 to 3879, 3889 to 3907, 3913 to 3947, 3948 to 3982, 3984 to 4018, 4022 to 4056, 4057 to 4083, 4088 to 4122, 4132 to 4149, 4156 to 4190, 4191 to 4225, 4227 to 4261, 4265 to 4299, 4300 to 4326, 4331 to 4365, 4375 to 4392, 4399 to 4433, 4434 to 4468, 4470 to 4504, 4508 to 4542, 4543 to 4569, 4574 to 4608, 4618 to 4635, 4642 to 4676, 4677 to 4711, 4713 to 4747, 4751 to 4785, 4786 to 4812, 4817 to 4851, 4861 to 4878, 4885 to 4919, 4920 to 4954, 4956 to 4990, 4994 to 5028, 5029 to 5055, 5060 to 5094, 5104 to 5121, 5128 to 5162, 5163 to 5197, 5199 to 5233, 5237 to 5271, 5272 to 5298, 5303 to 5337, 5347 to 5364, 5371 to 5405, 5406 to 5440, 5442 to 5476, 5480 to 5514, 5515 to 5541, 5546 to 5580, 5588 to 5607, 5614 to 5648, 5649 to 5683, 5690 to 5718, 5722 to 5756, 5757 to 5783, 5788 to 5822, 5829 to 5853, 5856 to 5890, 5893 to 5924, 5926 to 5960, 5964 to 5998, 5999 to 6025, 6030 to 6064, 6071 to 6099, 6100 to 6134, 6135 to 6169, 6171 to 6205, 6209 to 6243, 6244 to 6274, 6275 to 6309, 6316 to 6344, 6345 to 6379, 6380 to 6414, 6416 to 6450, 6458 to 6488, 6489 to 6515, 6532 to 6554, 6561 to 6589, 6590 to 6624, 6626 to 6660, 6661 to 6695, 6697 to 6731, 6732 to 6766, 6767 to 6801, 6808 to 6836, 6837 to 6871, 6872 to 6906, 6907 to 6941, 6942 to 6976, 6977 to 7011, 7012 to 7046, 7053 to 7081, 7082 to 7110, 7125 to 7151, 7152 to 7186, 7188 to 7222, 7223 to 7257, 7258 to 7292, 7297 to 7327, 7328 to 7362, 7365 to 7399, 7402 to 7433, 7436 to 7470, 7479 to 7505, 7514 to 7542, 7543 to 7577, 7578 to 7612, 7619 to 7647, 7650 to 7684, 7687 to 7721, 7731 to 7759, 7760 to 7794, 7795 to 7829, 7830 to 7864, 7867 to 7888, 7892 to 7921, 7930 to 7957, 7961 to 7988, 7992 to 8013, 8016 to 8045, 8054 to 8075, 8078 to 8112, 8116 to 8143, 8147 to 8168, 8171 to 8205, 8209 to 8232, 8233 to 8267, 8269 to 8303, and 8304 to 8330; these read TPYI…KTKG, PYAS…VAKT, DIEH…DTKD, KYLL…ADKS, LFYP…EQQA, QFTP…NKIK, EVAN…NMKD, IYFM…KNKG, NVLP…KTKA, ETPK…KDIL, HYVG…EDRG, KFTQ…SEKF, KCHI…KSKA, KFDI…KNKG, GVLS…KTKA, HYVG…EDKG, KFTA…GEKF, KFDI…KSKG, GALS…KSKT, IYTA…VDYK, SYSY…SWMK, EMEK…KYRQ, KFTS…EIIH, KYNL…DLSK, GYDL…KAKG, GFQS…KTKS, KYNT…HSLH, HYTY…NWMK, DVEK…KYRQ, KFTS…DVKH, KYTM…DLIA, GNNV…KSKG, GFRS…NTKT, SYHT…NYKQ, HYTY…SFLK, EVEK…KYRQ, KFTS…KLKH, KYTI…KTIA, GFLS…ASKT, KYHT…QSYH, HYTL…NWMK, ESLE…KLKF, DTME…KDKT, TIHV…EEKK, GYDL…QAKG, GFRS…KSKT, SFHT…ANYR, TYNM…DFMK, KKAM…KYRQ, KYST…ADKT, KVHI…ESKK, GYDL…KGKG, SYHT…TNYK, KYIL…EWYK, QFKK…KDKT, KIHV…EALK, GYDL…KQLG, GFRS…KWKT, KFSS…VDYK, QWTC…WLRG, KRAS…KYRQ, KFTS…KDKT, QIHI…ELKR, GARN…KWKT, QWTC…WLKG, KRAT…VYRQ, KFSS…KDKT, TVHI…EAKR, GYDM…KQLG, GARA…KWKT, QWTC…WMRG, DVEK…IYRQ, QIHI…EAKK, EWTC…WLRG, SMDV…IYRQ, QVHI…EAKK, GARA…KYKT, RYSS…VDYK, EWIC…WMKG, DSLE…IYRQ, KFTS…NDKK, TIHV…ESKK, KFSS…IDYK, KFTC…ADKT, SIHV…ESKM, DYDL…KQKG, GAQS…KWKT, KFSS…IDYR, EMNR…RLYR, SFTS…KDKS, NITI…DAKQ, GYDI…KQLG, GFRT…KSKG, IHNT…IDYR, EVMR…RLYR, KFTS…KEKA, NVNV…DVKM, GYDL…KQKG, GCRS…DHKA, KISI…VDYR, HWSC…WLRG, NITI…DTKQ, RWSC…WLRG, SPEV…SVYR, KYTS…KDKT, SIHI…EMKA, DAIP…KQKG, GTLT…KWKA, KIQS…MDYR, DSVS…TKIE, NFTP…ATKS, TLTE…RQKA, GYIL…KQKG, GVPT…KTKA, KINI…IDYR, QWMC…WLRG, DSVD…ENYP, NFRS…KAKG, KYTF…GTKA, GYTL…KQKG, AGKV…DTKA, NVHI…HYFH, QWTS…WLKG, DTPQ…ENLQ, NYNL…QIKD, KYTT…RVKA, SYIL…KFKA, VDDD…KNKM, KIHI…IDYR, HVRK…WLKG, DTPE…KTRN, DYKL…HSVR, KVAP…TLPT, GYRL…HTKA, GYTL…KLKD, KIHT…KMQG, HMIS…VLKG, DTPD…KMRD, KYKV…KQKS, IFTS…KERP, HHHA…KMKD, KYTP…KTKG, KYHT…SQLG, IWRS…WLKG, DTPD…RTKS, DFKY…YKSS, PDML…KSKD, KFTS…KAKP, GYTT…RNKS, NCTI…ANKA, HWKW…FLKG, VTDD…KERG, TCHA…KHLA, SYTT…KEKG, NYSI…DAKE, HYTT…KEGS, PDIE…KEKG, DSQL…KLHK, PVTD…KSKG, HYHT…KERG, ETPT…ESIK, NLTG…ESIR, GLTE…LEVK, ETPD…MEKA, NFTS…KSMS, YYET…NSKG, KITV…PGTA, KTPE…KYKE, QGTP…KENL, TPEI…KGIP, TPEM…KGTP, TPEM…YKEN, KGIP…KENL, KGTP…KGTP, KATA…KATP, TPEM…ENMR, KATP…KQIQ, KAAY…KHKG, and CFTP…INYR. The interaction with SVIL stretch occupies residues 8313 to 8468; it reads ITERVKKNMQ…SIPSHPSTAG (156 aa). Disordered regions lie at residues 8385 to 8422 and 8439 to 8463; these read QAQR…LSTY and TTEL…IPSH. Over residues 8405–8419 the composition is skewed to basic and acidic residues; sequence GEEKSEHSEAPDHHL. Over residues 8444 to 8459 the composition is skewed to low complexity; that stretch reads QQRSSSVATQQTTVSS. Residues 8466–8525 enclose the SH3 domain; sequence TAGKIFRAMYDYMAADADEVSFKDGDAIINVQAIDEGWMYGTVQRTGRTGMLPANYVEAI.

As to quaternary structure, monomer and homooligomer. Interacts with TTN/titin. Interacts with SVIL. Interacts (via nebulin repeats 160-164) with DES. Expressed in skeletal muscle (at protein level). Located in the thin filament of striated muscle.

The protein localises to the cytoplasm. It is found in the myofibril. Its subcellular location is the sarcomere. It localises to the cytoskeleton. Functionally, this giant muscle protein may be involved in maintaining the structural integrity of sarcomeres and the membrane system associated with the myofibrils. Binds and stabilize F-actin. This is Nebulin (NEB) from Homo sapiens (Human).